We begin with the raw amino-acid sequence, 93 residues long: Small ribosomal subunit protein bS20 (93 aa).

The protein belongs to the bacterial ribosomal protein bS20 family.

Binds directly to 16S ribosomal RNA. The protein is Small ribosomal subunit protein bS20 of Dictyoglomus turgidum (strain DSM 6724 / Z-1310).